The chain runs to 174 residues: UPF0340 protein SE_1711 (174 aa).

It belongs to the UPF0340 family.

The polypeptide is UPF0340 protein SE_1711 (Staphylococcus epidermidis (strain ATCC 12228 / FDA PCI 1200)).